Consider the following 1977-residue polypeptide: Protein rotatin homolog (1977 aa).

Positions 141–166 (SVSSLSSNDIPSQATESADSSSNQIY) are disordered.

It belongs to the rotatin family. Interacts with Rcd4;this complex is recruited to daughter centrioles before their conversion to centrosomes.

It is found in the cytoplasm. It localises to the cytoskeleton. The protein resides in the microtubule organizing center. The protein localises to the centrosome. Its subcellular location is the centriole. Its function is as follows. Participes in the structural integrity of both centrioles and basal bodies and in centriole cohesion. Participates in the later stages of centriole assembly through the interaction with Rcd4 leading to the centriole to centrosome conversion. The chain is Protein rotatin homolog from Drosophila melanogaster (Fruit fly).